Here is a 187-residue protein sequence, read N- to C-terminus: Cytochrome b-245 chaperone 1 (187 aa).

A helical transmembrane segment spans residues 20 to 42; it reads GIRSWSLLVGILSTGLAAAYYSG. A disordered region spans residues 167-187; the sequence is ESPSERSQSSDSEPDGPGGQS. S168 and S170 each carry phosphoserine.

It belongs to the CYBC1 family. In terms of assembly, interacts with CYBB; CYBC1 may act as a chaperone stabilizing Cytochrome b-245 heterodimer.

It localises to the endoplasmic reticulum membrane. Its function is as follows. Functions as a chaperone necessary for a stable expression of the CYBA and CYBB subunits of the cytochrome b-245 heterodimer. Controls the phagocyte respiratory burst and is essential for innate immunity. The chain is Cytochrome b-245 chaperone 1 from Rattus norvegicus (Rat).